A 3680-amino-acid chain; its full sequence is Dystrophin (3680 aa).

Positions 1 to 237 (MLWWEEVEDC…ILMYITSLFQ (237 aa)) are actin-binding. 2 consecutive Calponin-homology (CH) domains span residues 15–119 (DVQK…LHWQ) and 134–240 (TNSE…QVLP). The tract at residues 63–72 (PKEKGSTRVH) is ANK2- and ANK-3 binding. Polar residues predominate over residues 310–323 (TSDPTRSPLPSQHL). The segment at 310–332 (TSDPTRSPLPSQHLETPEDKSFG) is disordered. 24 Spectrin repeats span residues 340 to 448 (ANLD…NLHK), 449 to 557 (VLMD…LLQD), 560 to 668 (LKWQ…QISQ), 720 to 829 (EIRK…WLEY), 831 to 935 (NNII…ELQT), 944 to 1047 (RYQE…KLEE), 1050 to 1156 (AKLR…ALKG), 1159 to 1265 (DKTV…TLEE), 1268 to 1369 (ACWH…LLEQ), 1370 to 1465 (SIQS…LFQK), 1470 to 1570 (EQRL…QLEK), 1573 to 1678 (KLSR…LLLE), 1681 to 1780 (KHME…KASI), 1781 to 1876 (PLKE…KALE), 1879 to 1981 (HQWY…TVHE), 1994 to 2103 (EISY…RFDR), 2106 to 2210 (EKWR…RLEE), 2213 to 2320 (NILS…EIEA), 2321 to 2418 (HVKD…LRAK), 2470 to 2572 (FNRA…QLTE), 2575 to 2681 (KDST…ALEE), 2684 to 2797 (RLLQ…HLEA), 2803 to 2925 (KRLH…RKID), and 2930 to 3035 (RLQE…QLHE). Residues 1418 to 1915 (DLTSHEISLE…PEPRDERKIK (498 aa)) form an interaction with SYNM region. In terms of domain architecture, WW spans 3050 to 3083 (TSVQGPWERAISPNKVPYYINHETQTTCWDHPKM). The interval 3053 to 3403 (QGPWERAISP…TVLEGDNMET (351 aa)) is interaction with SYNM. Residues 3303–3359 (KHQAKCNICKECPIIGFRYRSLKHFNYDICQSCFFSGRVAKGHKMHYPMVEYCTPTT) form a ZZ-type; degenerate zinc finger. C3308, C3311, C3332, and C3335 together coordinate Zn(2+). The tract at residues 3461–3513 (DDEHLLIQHYWRSLNQESPLSQPRSPAQILISLESEERGELERILADLEGRNR) is binds to SNTB1. Phosphoserine is present on residues S3478, S3485, and S3495. Disordered regions lie at residues 3524–3549 (QQHEHKGLSPLPSPPEMMPTSPQSPR) and 3595–3680 (PQAE…EDTM). 2 stretches are compositionally biased toward polar residues: residues 3602–3621 (NGTTVSSPSTSLQRSDSSQP) and 3658–3668 (LNHSFPSSRGR). S3607, S3608, S3612, S3618, S3619, and S3661 each carry phosphoserine.

In terms of assembly, interacts with SYNM. Interacts with the syntrophins SNTG1 and SNTG2. Interacts with KRT19. Component of the dystrophin-associated glycoprotein complex which is composed of three subcomplexes: a cytoplasmic complex comprised of DMD (or UTRN), DTNA and a number of syntrophins, such as SNTB1, SNTB2, SNTG1 and SNTG2, the transmembrane dystroglycan complex, and the sarcoglycan-sarcospan complex. Interacts with DAG1 (betaDAG1) with DMD; the interaction is inhibited by phosphorylation on the PPXY motif of DAG1. Interacts with SYNM; SNTA1 and SNTB1. Interacts with CMYA5. Directly interacts with ANK2 and ANK3; these interactions do not interfere with betaDAG1-binding and are necessary for proper localization in muscle cells. Identified in a dystroglycan complex that contains at least PRX, DRP2, UTRN, DMD and DAG1. Interacts with DTNB. Interacts with PGM5; the interaction is direct. Interacts with NOS1; localizes NOS1 to sarcolemma in muscle cells.

It localises to the cell membrane. The protein resides in the sarcolemma. Its subcellular location is the cytoplasm. It is found in the cytoskeleton. The protein localises to the postsynaptic cell membrane. Anchors the extracellular matrix to the cytoskeleton via F-actin. Ligand for dystroglycan. Component of the dystrophin-associated glycoprotein complex which accumulates at the neuromuscular junction (NMJ) and at a variety of synapses in the peripheral and central nervous systems and has a structural function in stabilizing the sarcolemma. Also implicated in signaling events and synaptic transmission. This Canis lupus familiaris (Dog) protein is Dystrophin (DMD).